The following is a 659-amino-acid chain: Mitochondrial Rho GTPase 1 (659 aa).

Residues 1 to 631 lie on the Cytoplasmic side of the membrane; the sequence is MTKTRIRIVV…LTNDIDYRQT (631 aa). In terms of domain architecture, Miro 1 spans 3–183; sequence KTRIRIVVCG…FYLCQRTITN (181 aa). Residues 12–19, 61–63, and 115–118 contribute to the GTP site; these read GDSGVGKT, DTG, and NKCD. EF-hand domains are found at residues 199–234 and 328–363; these read LGVL…CFSK and LGYR…TPGL. Ca(2+)-binding residues include Asp212, Asp214, Asp216, Glu223, Asp341, Asp343, Asp345, and Glu352. A Miro 2 domain is found at 444-609; sequence RKVLNCYMLG…FIKLTEVALE (166 aa). GTP is bound by residues 453–460, 489–493, and 558–561; these read GKGNSGKS, ELKGG, and LKAD. Residues 632–652 traverse the membrane as a helical; Anchor for type IV membrane protein segment; sequence IVAISSVVGFASLFTFTALKI. The Mitochondrial intermembrane portion of the chain corresponds to 653–659; that stretch reads YSSFKNT.

The protein belongs to the mitochondrial Rho GTPase family.

It localises to the mitochondrion outer membrane. Functionally, mitochondrial GTPase involved in mitochondrial trafficking. Probably involved in control of anterograde transport of mitochondria and their subcellular distribution. This Kluyveromyces lactis (strain ATCC 8585 / CBS 2359 / DSM 70799 / NBRC 1267 / NRRL Y-1140 / WM37) (Yeast) protein is Mitochondrial Rho GTPase 1 (GEM1).